A 440-amino-acid chain; its full sequence is 5-methylthioadenosine/S-adenosylhomocysteine deaminase (440 aa).

Zn(2+) is bound by residues histidine 70 and histidine 72. 2 residues coordinate substrate: glutamate 99 and histidine 191. Residue histidine 218 coordinates Zn(2+). Substrate is bound by residues glutamate 221 and aspartate 306. Residue aspartate 306 coordinates Zn(2+).

This sequence belongs to the metallo-dependent hydrolases superfamily. MTA/SAH deaminase family. Zn(2+) is required as a cofactor.

The catalysed reaction is S-adenosyl-L-homocysteine + H2O + H(+) = S-inosyl-L-homocysteine + NH4(+). It carries out the reaction S-methyl-5'-thioadenosine + H2O + H(+) = S-methyl-5'-thioinosine + NH4(+). In terms of biological role, catalyzes the deamination of 5-methylthioadenosine and S-adenosyl-L-homocysteine into 5-methylthioinosine and S-inosyl-L-homocysteine, respectively. Is also able to deaminate adenosine. The chain is 5-methylthioadenosine/S-adenosylhomocysteine deaminase from Nitratidesulfovibrio vulgaris (strain DSM 19637 / Miyazaki F) (Desulfovibrio vulgaris).